The chain runs to 30 residues: Cyclotide cycloviolacin O17 (30 aa).

Positions 1–30 (GIPCGESCVWIPCISAAIGCSCKNKVCYRN) form a cross-link, cyclopeptide (Gly-Asn). Intrachain disulfides connect Cys4–Cys20, Cys8–Cys22, and Cys13–Cys27.

This is a cyclic peptide.

In terms of biological role, probably participates in a plant defense mechanism. The chain is Cyclotide cycloviolacin O17 from Psychotria brachyceras.